The following is a 414-amino-acid chain: Glyco-Gag protein (414 aa).

Residues 1–51 lie on the Cytoplasmic side of the membrane; it reads MSGASSGTAIGAHLFGVSPECRVLIGDEGAGPSKSLSEVSFSVWYQSRAAR. The chain crosses the membrane as a helical span at residues 52-72; that stretch reads LVIFCLVASFLVPCLTFLIAE. Topologically, residues 73–414 are extracellular; sequence TVMGQTIATP…TNLAQVKQVV (342 aa). N-linked (GlcNAc...) asparagine; by host glycosylation occurs at Asn-134. Residues 171-282 are disordered; it reads VRPFLPPPKP…LREGPNNRPQ (112 aa). Pro residues predominate over residues 174–193; sequence FLPPPKPPTPLPQPLSPQPS. The span at 194–206 shows a compositional bias: low complexity; sequence APLTSSLYPVLPK. Over residues 210 to 220 the composition is skewed to pro residues; sequence PKPPVLPPDPS.

Post-translationally, glycosylated by host. In terms of processing, cleaved by host near the middle of the molecule, releasing the c-terminal half containing capsid and nucleoprotein domains op GAG.

Its subcellular location is the host cell membrane. Its function is as follows. Plays a role in viral particle release. Presumably acts by facilitating the fission of the virion bud at the cell surface. This Felidae (cat family) protein is Glyco-Gag protein.